We begin with the raw amino-acid sequence, 173 residues long: MEIISTQKFILLTLATVAFLTPHGACLDELMKSSLESREDDDDKYYETKDSILEEKQRSLNFEEMKDWGSKNFMKVNTPTVNKVPNSVANLPLRFGRSNPEERSIKPSAYLPLRFGRAFGESLSRRAPNLSNRSGRSPLARSSIQSLLNLSQRFGKSVPISLSQGVQESEPGM.

The N-terminal stretch at 1–26 is a signal peptide; that stretch reads MEIISTQKFILLTLATVAFLTPHGAC. The propeptide occupies 27 to 82; sequence LDELMKSSLESREDDDDKYYETKDSILEEKQRSLNFEEMKDWGSKNFMKVNTPTVN. Phe95 bears the Phenylalanine amide mark. The propeptide occupies 98–103; the sequence is SNPEER. Phe115 bears the Phenylalanine amide mark. A propeptide spanning residues 118 to 140 is cleaved from the precursor; that stretch reads AFGESLSRRAPNLSNRSGRSPLA. The residue at position 154 (Phe154) is a Phenylalanine amide. A propeptide spanning residues 157–173 is cleaved from the precursor; the sequence is SVPISLSQGVQESEPGM.

The protein belongs to the FARP (FMRFamide related peptide) family. Specifically expressed in the diencephalon.

The protein resides in the secreted. Functionally, hypothalamic factor, responsible for the negative regulation of gonadotropin secretion. The polypeptide is Gonadotropin inhibitory hormone peptides (GNIH) (Coturnix japonica (Japanese quail)).